The sequence spans 340 residues: Probable dual-specificity RNA methyltransferase RlmN (340 aa).

Glutamate 93 serves as the catalytic Proton acceptor. The region spanning 99-327 is the Radical SAM core domain; it reads TAKRLTVCVS…VSVRYSRGLE (229 aa). An intrachain disulfide couples cysteine 106 to cysteine 332. Cysteine 113, cysteine 117, and cysteine 120 together coordinate [4Fe-4S] cluster. Residues 160–161, serine 190, 213–215, and asparagine 289 each bind S-adenosyl-L-methionine; these read GE and SLH. Cysteine 332 (S-methylcysteine intermediate) is an active-site residue.

This sequence belongs to the radical SAM superfamily. RlmN family. Requires [4Fe-4S] cluster as cofactor.

The protein resides in the cytoplasm. The enzyme catalyses adenosine(2503) in 23S rRNA + 2 reduced [2Fe-2S]-[ferredoxin] + 2 S-adenosyl-L-methionine = 2-methyladenosine(2503) in 23S rRNA + 5'-deoxyadenosine + L-methionine + 2 oxidized [2Fe-2S]-[ferredoxin] + S-adenosyl-L-homocysteine. It catalyses the reaction adenosine(37) in tRNA + 2 reduced [2Fe-2S]-[ferredoxin] + 2 S-adenosyl-L-methionine = 2-methyladenosine(37) in tRNA + 5'-deoxyadenosine + L-methionine + 2 oxidized [2Fe-2S]-[ferredoxin] + S-adenosyl-L-homocysteine. In terms of biological role, specifically methylates position 2 of adenine 2503 in 23S rRNA and position 2 of adenine 37 in tRNAs. This chain is Probable dual-specificity RNA methyltransferase RlmN, found in Rippkaea orientalis (strain PCC 8801 / RF-1) (Cyanothece sp. (strain PCC 8801)).